A 174-amino-acid polypeptide reads, in one-letter code: Small ribosomal subunit protein uS4 (174 aa).

In terms of domain architecture, S4 RNA-binding spans 105 to 169 (RRLQTVAYRK…SPLADDLHPE (65 aa)).

The protein belongs to the universal ribosomal protein uS4 family. Part of the 30S ribosomal subunit. Contacts protein S5. The interaction surface between S4 and S5 is involved in control of translational fidelity.

One of the primary rRNA binding proteins, it binds directly to 16S rRNA where it nucleates assembly of the body of the 30S subunit. Functionally, with S5 and S12 plays an important role in translational accuracy. The protein is Small ribosomal subunit protein uS4 of Natronomonas pharaonis (strain ATCC 35678 / DSM 2160 / CIP 103997 / JCM 8858 / NBRC 14720 / NCIMB 2260 / Gabara) (Halobacterium pharaonis).